The primary structure comprises 735 residues: MGEFKPPLPQGAGYAIVLGLGAVFAGMMVLTTYLLKRYQKEIITAEEFTTAGRSVKTGLVAAAVVSSWIWCSTLLTSSTKEYADGIFGGYAYAAGACFQIIAFAILAIKTKQMAPNAHTYLELVRTRYGKIGHGCYLFYAIATNILVTSMLLTSGSAVFSDLTGMNTIASCFLLPVGVVVYTLFGGIKATFLTDYMHTCVIIIIVLVFAFKVYATSDVLGSPGKVYDLVREAAKRHPVDGNYQGEYMTMTSKSAGILLIINLIGNFGTVFLDNGYWNKAISASPAASLKAYAIGGLAWFAVPSLISLTMGLACLAVETSPNFPTYPDPLTSFQANSGLVLPAAAIAIMGKGGAVASLLMIFMAVTSAMSAELIAVSSVFTYDIYREYIDPRASGKKLIYTSHVACIFFGLAMSGFSVGLYYGGISMGYIYEMMGIIISSAVLPVVLTLCSKDMNLVAAVVSPILGTGLAIMSWLVCTKSLYKELTVDTTFMDYPMLTGNLVALLSPAIFIPILTYVFKPQNFDWEKMKDITRVDETAELVQADPDIQLYDAEANDKEQEEETNSLVSDSEKNDVRVNNEKLIEPNLGVVISNAIFQEDDTQLQNELDEEQRELARGLKIAYFLCVFFALAFLVVWPMPMYGSKYIFSKKFFTGWVVVMIIWLFFSAFAVCIYPLWEGRHGIYTTLRGLYWDLSGQTYKLREWQNSNPQDLHVVTSQISARAHRQSSHFGQVDEII.

Over 1 to 14 (MGEFKPPLPQGAGY) the chain is Cytoplasmic. Residues 15-35 (AIVLGLGAVFAGMMVLTTYLL) form a helical membrane-spanning segment. Residues 36–85 (KRYQKEIITAEEFTTAGRSVKTGLVAAAVVSSWIWCSTLLTSSTKEYADG) are Extracellular-facing. Residues 86–106 (IFGGYAYAAGACFQIIAFAIL) form a helical membrane-spanning segment. At 107-130 (AIKTKQMAPNAHTYLELVRTRYGK) the chain is on the cytoplasmic side. The chain crosses the membrane as a helical span at residues 131-151 (IGHGCYLFYAIATNILVTSML). The Extracellular portion of the chain corresponds to 152-166 (LTSGSAVFSDLTGMN). The helical transmembrane segment at 167-187 (TIASCFLLPVGVVVYTLFGGI) threads the bilayer. Residues 188–189 (KA) are Cytoplasmic-facing. A helical transmembrane segment spans residues 190–210 (TFLTDYMHTCVIIIIVLVFAF). Over 211–253 (KVYATSDVLGSPGKVYDLVREAAKRHPVDGNYQGEYMTMTSKS) the chain is Extracellular. A helical transmembrane segment spans residues 254-274 (AGILLIINLIGNFGTVFLDNG). The Cytoplasmic segment spans residues 275 to 295 (YWNKAISASPAASLKAYAIGG). Residues 296-316 (LAWFAVPSLISLTMGLACLAV) form a helical membrane-spanning segment. Topologically, residues 317 to 343 (ETSPNFPTYPDPLTSFQANSGLVLPAA) are extracellular. The helical transmembrane segment at 344-364 (AIAIMGKGGAVASLLMIFMAV) threads the bilayer. Residues 365–403 (TSAMSAELIAVSSVFTYDIYREYIDPRASGKKLIYTSHV) lie on the Cytoplasmic side of the membrane. Residues 404-424 (ACIFFGLAMSGFSVGLYYGGI) form a helical membrane-spanning segment. Position 425 (Ser425) is a topological domain, extracellular. Residues 426–446 (MGYIYEMMGIIISSAVLPVVL) form a helical membrane-spanning segment. The Cytoplasmic segment spans residues 447-454 (TLCSKDMN). The helical transmembrane segment at 455 to 475 (LVAAVVSPILGTGLAIMSWLV) threads the bilayer. The Extracellular portion of the chain corresponds to 476-496 (CTKSLYKELTVDTTFMDYPML). The chain crosses the membrane as a helical span at residues 497 to 517 (TGNLVALLSPAIFIPILTYVF). At 518-618 (KPQNFDWEKM…EQRELARGLK (101 aa)) the chain is on the cytoplasmic side. The interval 553–572 (ANDKEQEEETNSLVSDSEKN) is disordered. Residues 619 to 639 (IAYFLCVFFALAFLVVWPMPM) form a helical membrane-spanning segment. At 640–650 (YGSKYIFSKKF) the chain is on the extracellular side. A helical membrane pass occupies residues 651–671 (FTGWVVVMIIWLFFSAFAVCI). At 672 to 735 (YPLWEGRHGI…SHFGQVDEII (64 aa)) the chain is on the cytoplasmic side.

It belongs to the sodium:solute symporter (SSF) (TC 2.A.21) family. In terms of assembly, may polymerize.

It localises to the membrane. Functionally, required for active transport of urea. In Saccharomyces cerevisiae (strain ATCC 204508 / S288c) (Baker's yeast), this protein is Urea active transporter (DUR3).